Consider the following 233-residue polypeptide: Synaptogyrin-4 (233 aa).

The MARVEL domain maps to 18-169 (FLRRPKSISR…QAYLAFQDLR (152 aa)). 4 helical membrane passes run 25 to 45 (ISRI…LTDG), 66 to 86 (CSFA…FLAI), 104 to 124 (LLDF…FCFL), and 145 to 165 (AAIA…YLAF). The interval 191-233 (SPSSTSPSNPPITGPNSLSYTSSALSPYMTTPKAPRLAMMPDS) is disordered. Residues 204-219 (GPNSLSYTSSALSPYM) are compositionally biased toward polar residues.

It belongs to the synaptogyrin family.

It is found in the membrane. This Mus musculus (Mouse) protein is Synaptogyrin-4 (Syngr4).